We begin with the raw amino-acid sequence, 422 residues long: Platelet-activating factor acetylhydrolase (422 aa).

An N-terminal signal peptide occupies residues Met1–Ser21. Ser266 serves as the catalytic Nucleophile. Asp289 (charge relay system) is an active-site residue. A glycan (N-linked (GlcNAc...) asparagine) is linked at Asn331. The active-site Charge relay system is His345.

It belongs to the AB hydrolase superfamily. Lipase family. Plasma.

Its subcellular location is the secreted. The protein localises to the extracellular space. It catalyses the reaction a 1-O-alkyl-2-acetyl-sn-glycero-3-phosphocholine + H2O = a 1-O-alkyl-sn-glycero-3-phosphocholine + acetate + H(+). Modulates the action of platelet-activating factor (PAF) by hydrolyzing the sn-2 ester bond to yield the biologically inactive lyso-PAF. Has a specificity for substrates with a short residue at the sn-2 position. It is inactive against long-chain phospholipids. The polypeptide is Platelet-activating factor acetylhydrolase (PLA2G7) (Gallus gallus (Chicken)).